A 258-amino-acid polypeptide reads, in one-letter code: Cell division protein ZapD (258 aa).

It belongs to the ZapD family. Interacts with FtsZ.

The protein localises to the cytoplasm. Cell division factor that enhances FtsZ-ring assembly. Directly interacts with FtsZ and promotes bundling of FtsZ protofilaments, with a reduction in FtsZ GTPase activity. This chain is Cell division protein ZapD, found in Coxiella burnetii (strain RSA 331 / Henzerling II).